Here is a 244-residue protein sequence, read N- to C-terminus: Leucyl/phenylalanyl-tRNA--protein transferase (244 aa).

It belongs to the L/F-transferase family.

The protein localises to the cytoplasm. The catalysed reaction is N-terminal L-lysyl-[protein] + L-leucyl-tRNA(Leu) = N-terminal L-leucyl-L-lysyl-[protein] + tRNA(Leu) + H(+). The enzyme catalyses N-terminal L-arginyl-[protein] + L-leucyl-tRNA(Leu) = N-terminal L-leucyl-L-arginyl-[protein] + tRNA(Leu) + H(+). It catalyses the reaction L-phenylalanyl-tRNA(Phe) + an N-terminal L-alpha-aminoacyl-[protein] = an N-terminal L-phenylalanyl-L-alpha-aminoacyl-[protein] + tRNA(Phe). Functionally, functions in the N-end rule pathway of protein degradation where it conjugates Leu, Phe and, less efficiently, Met from aminoacyl-tRNAs to the N-termini of proteins containing an N-terminal arginine or lysine. The sequence is that of Leucyl/phenylalanyl-tRNA--protein transferase from Thermodesulfovibrio yellowstonii (strain ATCC 51303 / DSM 11347 / YP87).